Here is a 234-residue protein sequence, read N- to C-terminus: Methylamine utilization ferredoxin-type protein MauM (234 aa).

4 4Fe-4S ferredoxin-type domains span residues 61–91, 98–131, 140–176, and 184–215; these read ALAE…LASW, GTPF…PLLT, VAVL…LKPI, and QIPT…VLPR. [4Fe-4S] cluster is bound by residues cysteine 71, cysteine 74, cysteine 77, cysteine 81, cysteine 109, cysteine 112, cysteine 117, cysteine 121, cysteine 149, cysteine 157, cysteine 160, cysteine 164, cysteine 193, cysteine 196, cysteine 199, and cysteine 203.

Its pathway is one-carbon metabolism; methylamine degradation. In terms of biological role, involved in electron transfer. The chain is Methylamine utilization ferredoxin-type protein MauM (mauM) from Methylobacillus flagellatus (strain ATCC 51484 / DSM 6875 / VKM B-1610 / KT).